The sequence spans 214 residues: Adenylate kinase (214 aa).

10–15 is an ATP binding site; the sequence is GAGKGT. The NMP stretch occupies residues 30 to 59; it reads STGDMLRAAIKAGTELGLNAKAVMDAGQLV. AMP contacts are provided by residues Thr-31, Arg-36, 57–59, 85–88, and Gln-92; these read QLV and GFPR. The tract at residues 122–159 is LID; it reads GRRVHSGSGRTYHVVFNPPKVEGKDDVTGEDLVIRADD. Residues Arg-123 and 132–133 each bind ATP; that span reads TY. The AMP site is built by Arg-156 and Arg-167. Gln-200 is a binding site for ATP.

This sequence belongs to the adenylate kinase family. Monomer.

Its subcellular location is the cytoplasm. It carries out the reaction AMP + ATP = 2 ADP. The protein operates within purine metabolism; AMP biosynthesis via salvage pathway; AMP from ADP: step 1/1. In terms of biological role, catalyzes the reversible transfer of the terminal phosphate group between ATP and AMP. Plays an important role in cellular energy homeostasis and in adenine nucleotide metabolism. The polypeptide is Adenylate kinase (Aeromonas salmonicida (strain A449)).